The chain runs to 478 residues: PRAME family member 27 (478 aa).

One copy of the LRR 1 repeat lies at 17 to 40 (RSLLRDQALAMSTLEELPTELFPP). The LRR 1; degenerate repeat unit spans residues 99–126 (RWKLQVLDLQDVCENFWMVWSEAMARGS). The stretch at 181–205 (HLCCKKLKILGMPFRNIRSILKMVN) is one LRR 2; degenerate repeat. An LRR 3; degenerate repeat occupies 206-232 (LDCIQEVEVNCKWVLPILTQFTPYLGH). The LRR 4; degenerate repeat unit spans residues 233–268 (MRNLQKLVLSHMDVSRYVSPEQKKEIVTQFTTQFLK). LRR repeat units follow at residues 269–294 (LHCL…LSCL), 295–326 (KTSL…SQLK), 327–348 (TLDL…ILLE), 351–378 (AATL…ALSR), and 379–403 (CFEL…LLSH).

The protein belongs to the PRAME family.

The sequence is that of PRAME family member 27 from Homo sapiens (Human).